A 197-amino-acid chain; its full sequence is Phosphoheptose isomerase (197 aa).

The SIS domain occupies 37–197 (MLQCLMNDGK…CIDSVLLEGM (161 aa)). Residue 52–54 (NGG) coordinates substrate. Residues His61 and Glu65 each coordinate Zn(2+). Residues Glu65, 94 to 95 (ND), 120 to 122 (STS), Ser125, and Gln175 each bind substrate. 2 residues coordinate Zn(2+): Gln175 and His183.

The protein belongs to the SIS family. GmhA subfamily. As to quaternary structure, homotetramer. It depends on Zn(2+) as a cofactor.

It localises to the cytoplasm. The catalysed reaction is 2 D-sedoheptulose 7-phosphate = D-glycero-alpha-D-manno-heptose 7-phosphate + D-glycero-beta-D-manno-heptose 7-phosphate. Its pathway is carbohydrate biosynthesis; D-glycero-D-manno-heptose 7-phosphate biosynthesis; D-glycero-alpha-D-manno-heptose 7-phosphate and D-glycero-beta-D-manno-heptose 7-phosphate from sedoheptulose 7-phosphate: step 1/1. Functionally, catalyzes the isomerization of sedoheptulose 7-phosphate in D-glycero-D-manno-heptose 7-phosphate. This is Phosphoheptose isomerase from Neisseria meningitidis serogroup C (strain 053442).